A 27-amino-acid polypeptide reads, in one-letter code: Trypsin inhibitor 1 (27 aa).

In terms of assembly, homodimer. In terms of processing, contains disulfide bonds. Glycosylated.

Its function is as follows. Inhibits trypsin (IC(50)=1.25 uM) but not chymotrypsin or papain. Has antibacterial activity against S.enterica ATCC 10708 (MIC=5 ug/ml) and S.aureus ATCC 25923 (MIC=5 ug/ml) but not against B.subtilis ATCC 6633 or P.aeruginosa ATCC 25619. Has no hemolytic activity against human erythrocytes. Is not toxic to mice. This is Trypsin inhibitor 1 from Jatropha curcas (Barbados nut).